Consider the following 479-residue polypeptide: MGNYHIGDGECRFRVVCSSPDVCEVGGYKVPFDSYQTLDSERQYSSTVWARGCRALNVGSVIAGTQSNAGKGVISGTSQGTGDCVILTGSPTVTIEGKPVAYHGSVVGINNHNCLGKLYTKIKSPMISVIDRTFNYERTAEVIHDLLLLKDLLSVGNIFDGDISPEVKNDLFQIKDPDQSWGEFFSIKNIRESLRNGIEGDKSQIREWFGENTLTQMGNGAITTLHGVADLALVTFDALLDTATATVACPIGEDGLCEQANINLNEKEQALFNISNSLINGQAWDALKKMIMDTNNGDQIALEHFASFLWGFMIPAKIPEENISGKVFVEPVVLEGGAGGNWTVFDEVLDSNVIKQLTLTGCGAACGEMLLRDRYIFVTQNVIGTELTSMTSLANKLNKFDVGWEGNAVSESSLYALSNTGSWGAMMWDSGSKVGHWVLVKGVDDAGNVIIYDPYQGSRYLMTEQEFKEVWNGHSVYKP.

This is Cysteine protease effector 1 from Escherichia coli O1:K1:H7 (strain ATCC 11775 / DSM 30083 / JCM 1649 / NBRC 102203 / NCTC 9001 / U5/41).